The primary structure comprises 463 residues: Siroheme synthase (463 aa).

The interval 1–203 (MDYLPLFHKL…GQGAEAERLL (203 aa)) is precorrin-2 dehydrogenase /sirohydrochlorin ferrochelatase. Residues 22–23 (EI) and 43–44 (PE) contribute to the NAD(+) site. Ser-128 bears the Phosphoserine mark. A uroporphyrinogen-III C-methyltransferase region spans residues 216-463 (GEVYLVGAGP…LAWFEGAQNS (248 aa)). An S-adenosyl-L-methionine-binding site is contributed by Pro-225. Residue Asp-248 is the Proton acceptor of the active site. Lys-270 (proton donor) is an active-site residue. S-adenosyl-L-methionine contacts are provided by residues 301-303 (GGD), Ile-306, 331-332 (TA), Met-383, and Gly-412.

In the N-terminal section; belongs to the precorrin-2 dehydrogenase / sirohydrochlorin ferrochelatase family. It in the C-terminal section; belongs to the precorrin methyltransferase family.

The enzyme catalyses uroporphyrinogen III + 2 S-adenosyl-L-methionine = precorrin-2 + 2 S-adenosyl-L-homocysteine + H(+). The catalysed reaction is precorrin-2 + NAD(+) = sirohydrochlorin + NADH + 2 H(+). It carries out the reaction siroheme + 2 H(+) = sirohydrochlorin + Fe(2+). It participates in cofactor biosynthesis; adenosylcobalamin biosynthesis; precorrin-2 from uroporphyrinogen III: step 1/1. It functions in the pathway cofactor biosynthesis; adenosylcobalamin biosynthesis; sirohydrochlorin from precorrin-2: step 1/1. The protein operates within porphyrin-containing compound metabolism; siroheme biosynthesis; precorrin-2 from uroporphyrinogen III: step 1/1. Its pathway is porphyrin-containing compound metabolism; siroheme biosynthesis; siroheme from sirohydrochlorin: step 1/1. It participates in porphyrin-containing compound metabolism; siroheme biosynthesis; sirohydrochlorin from precorrin-2: step 1/1. In terms of biological role, multifunctional enzyme that catalyzes the SAM-dependent methylations of uroporphyrinogen III at position C-2 and C-7 to form precorrin-2 via precorrin-1. Then it catalyzes the NAD-dependent ring dehydrogenation of precorrin-2 to yield sirohydrochlorin. Finally, it catalyzes the ferrochelation of sirohydrochlorin to yield siroheme. This chain is Siroheme synthase, found in Pseudomonas entomophila (strain L48).